Consider the following 38-residue polypeptide: Photosystem II reaction center protein L (38 aa).

Residues 17 to 37 (SLYWGLLLIFVLAVLFSSYFF) form a helical membrane-spanning segment.

It belongs to the PsbL family. In terms of assembly, PSII is composed of 1 copy each of membrane proteins PsbA, PsbB, PsbC, PsbD, PsbE, PsbF, PsbH, PsbI, PsbJ, PsbK, PsbL, PsbM, PsbT, PsbX, PsbY, PsbZ, Psb30/Ycf12, at least 3 peripheral proteins of the oxygen-evolving complex and a large number of cofactors. It forms dimeric complexes.

The protein resides in the plastid. Its subcellular location is the chloroplast thylakoid membrane. In terms of biological role, one of the components of the core complex of photosystem II (PSII). PSII is a light-driven water:plastoquinone oxidoreductase that uses light energy to abstract electrons from H(2)O, generating O(2) and a proton gradient subsequently used for ATP formation. It consists of a core antenna complex that captures photons, and an electron transfer chain that converts photonic excitation into a charge separation. This subunit is found at the monomer-monomer interface and is required for correct PSII assembly and/or dimerization. The sequence is that of Photosystem II reaction center protein L from Thalassiosira pseudonana (Marine diatom).